A 283-amino-acid polypeptide reads, in one-letter code: Nucleoid occlusion protein (283 aa).

A DNA-binding region (H-T-H motif) is located at residues 142-161 (ESLAQRLGKGQSTIANKLRL).

This sequence belongs to the ParB family.

It localises to the cytoplasm. Its subcellular location is the nucleoid. In terms of biological role, effects nucleoid occlusion by binding relatively nonspecifically to DNA and preventing the assembly of the division machinery in the vicinity of the nucleoid, especially under conditions that disturb the cell cycle. It helps to coordinate cell division and chromosome segregation by preventing the formation of the Z ring through the nucleoid, which would cause chromosome breakage. The polypeptide is Nucleoid occlusion protein (Shouchella clausii (strain KSM-K16) (Alkalihalobacillus clausii)).